We begin with the raw amino-acid sequence, 122 residues long: Large ribosomal subunit protein uL18 (122 aa).

Belongs to the universal ribosomal protein uL18 family. In terms of assembly, part of the 50S ribosomal subunit; part of the 5S rRNA/L5/L18/L25 subcomplex. Contacts the 5S and 23S rRNAs.

In terms of biological role, this is one of the proteins that bind and probably mediate the attachment of the 5S RNA into the large ribosomal subunit, where it forms part of the central protuberance. In Dictyoglomus thermophilum (strain ATCC 35947 / DSM 3960 / H-6-12), this protein is Large ribosomal subunit protein uL18.